The primary structure comprises 352 residues: Beta-hexosaminidase (352 aa).

Substrate contacts are provided by residues D74, R82, R149, and 179–180 (KH). Catalysis depends on H192, which acts as the Proton donor/acceptor. Residue D263 is the Nucleophile of the active site.

Belongs to the glycosyl hydrolase 3 family. NagZ subfamily.

Its subcellular location is the cytoplasm. It catalyses the reaction Hydrolysis of terminal non-reducing N-acetyl-D-hexosamine residues in N-acetyl-beta-D-hexosaminides.. Its pathway is cell wall biogenesis; peptidoglycan recycling. Functionally, plays a role in peptidoglycan recycling by cleaving the terminal beta-1,4-linked N-acetylglucosamine (GlcNAc) from peptide-linked peptidoglycan fragments, giving rise to free GlcNAc, anhydro-N-acetylmuramic acid and anhydro-N-acetylmuramic acid-linked peptides. This is Beta-hexosaminidase from Bordetella pertussis (strain Tohama I / ATCC BAA-589 / NCTC 13251).